The chain runs to 201 residues: Small ribosomal subunit protein uS5 (201 aa).

Positions 1 to 28 are disordered; it reads MAGPQRRGSGAGGGERRDRKGRDGGAGA. Over residues 14–23 the composition is skewed to basic and acidic residues; it reads GERRDRKGRD. Residues 34-97 enclose the S5 DRBM domain; sequence YVERVVAINR…EEAKKHFFKV (64 aa).

This sequence belongs to the universal ribosomal protein uS5 family. As to quaternary structure, part of the 30S ribosomal subunit. Contacts proteins S4 and S8.

With S4 and S12 plays an important role in translational accuracy. In terms of biological role, located at the back of the 30S subunit body where it stabilizes the conformation of the head with respect to the body. The protein is Small ribosomal subunit protein uS5 of Streptomyces coelicolor (strain ATCC BAA-471 / A3(2) / M145).